The chain runs to 509 residues: Bifunctional purine biosynthesis protein PurH (509 aa).

The 146-residue stretch at 1-146 (MTIQKINRVL…KNWYRVGVCV (146 aa)) folds into the MGS-like domain.

It belongs to the PurH family.

It catalyses the reaction (6R)-10-formyltetrahydrofolate + 5-amino-1-(5-phospho-beta-D-ribosyl)imidazole-4-carboxamide = 5-formamido-1-(5-phospho-D-ribosyl)imidazole-4-carboxamide + (6S)-5,6,7,8-tetrahydrofolate. It carries out the reaction IMP + H2O = 5-formamido-1-(5-phospho-D-ribosyl)imidazole-4-carboxamide. Its pathway is purine metabolism; IMP biosynthesis via de novo pathway; 5-formamido-1-(5-phospho-D-ribosyl)imidazole-4-carboxamide from 5-amino-1-(5-phospho-D-ribosyl)imidazole-4-carboxamide (10-formyl THF route): step 1/1. It functions in the pathway purine metabolism; IMP biosynthesis via de novo pathway; IMP from 5-formamido-1-(5-phospho-D-ribosyl)imidazole-4-carboxamide: step 1/1. The protein is Bifunctional purine biosynthesis protein PurH of Natranaerobius thermophilus (strain ATCC BAA-1301 / DSM 18059 / JW/NM-WN-LF).